We begin with the raw amino-acid sequence, 348 residues long: D-alanine--D-alanine ligase (348 aa).

An ATP-grasp domain is found at Lys136 to Glu344. Asn171–Glu226 provides a ligand contact to ATP. Mg(2+)-binding residues include Asp297, Glu311, and Asn313.

This sequence belongs to the D-alanine--D-alanine ligase family. Mg(2+) serves as cofactor. It depends on Mn(2+) as a cofactor.

It is found in the cytoplasm. It carries out the reaction 2 D-alanine + ATP = D-alanyl-D-alanine + ADP + phosphate + H(+). Its pathway is cell wall biogenesis; peptidoglycan biosynthesis. Functionally, cell wall formation. The sequence is that of D-alanine--D-alanine ligase from Prochlorococcus marinus (strain NATL1A).